Reading from the N-terminus, the 340-residue chain is Dihydroorotate dehydrogenase (quinone) (340 aa).

Residues 62–66 (AGMDK) and T86 contribute to the FMN site. K66 lines the substrate pocket. 111–115 (NRMGF) is a substrate binding site. FMN-binding residues include N139 and N172. N172 is a substrate binding site. Catalysis depends on S175, which acts as the Nucleophile. Substrate is bound at residue N177. K217 and T245 together coordinate FMN. Substrate is bound at residue 246–247 (NT). FMN contacts are provided by residues G268, G297, and 318–319 (YS).

Belongs to the dihydroorotate dehydrogenase family. Type 2 subfamily. In terms of assembly, monomer. FMN is required as a cofactor.

The protein localises to the cell membrane. The catalysed reaction is (S)-dihydroorotate + a quinone = orotate + a quinol. It participates in pyrimidine metabolism; UMP biosynthesis via de novo pathway; orotate from (S)-dihydroorotate (quinone route): step 1/1. Its function is as follows. Catalyzes the conversion of dihydroorotate to orotate with quinone as electron acceptor. The polypeptide is Dihydroorotate dehydrogenase (quinone) (Shewanella woodyi (strain ATCC 51908 / MS32)).